The sequence spans 435 residues: Thiosulfate sulfurtransferase YnjE (435 aa).

An N-terminal signal peptide occupies residues 1 to 23; sequence MKRVSQMTALAMALGLACASSWA. 3 Rhodanese domains span residues 36–138, 164–270, and 304–425; these read QQQN…RLQK, PAGD…PVER, and HRQD…NPVA. Catalysis depends on Cys385, which acts as the Cysteine persulfide intermediate. Arg390 is a substrate binding site.

Monomer.

It is found in the periplasm. It carries out the reaction thiosulfate + hydrogen cyanide = thiocyanate + sulfite + 2 H(+). The polypeptide is Thiosulfate sulfurtransferase YnjE (ynjE) (Escherichia coli (strain K12)).